The primary structure comprises 72 residues: Aurein-2.2 (72 aa).

The N-terminal stretch at 1–22 (MAFLKKSLFLVLFLGLVSLSIC) is a signal peptide. Positions 23-49 (EKEKRQNEEDEDENEAANHEEGSEEKR) are excised as a propeptide. Residues 27-47 (RQNEEDEDENEAANHEEGSEE) form a disordered region. Residues 38–47 (AANHEEGSEE) show a composition bias toward basic and acidic residues. A Leucine amide modification is found at L65. Positions 69–72 (NDLE) are excised as a propeptide.

Amidation is essential for antibacterial activity against Gram-positive bacteria. Expressed by the skin dorsal glands.

It localises to the secreted. The protein resides in the target cell membrane. Its function is as follows. Amphipathic alpha-helical antimicrobial peptide with weak to moderate activity against Gram-positive bacteria, and no activity against Gram-negative bacteria. Probably acts by disturbing membrane functions with its amphipathic structure. Strongly inhibits the formation of NO by neuronal nitric oxide synthase (nNOS) at micromolar concentrations. Acts by a non-competitive mechanism, probably by binding to calcium/calmodulin and as a consequence blocking calmodulin attachment to nNOS. In Ranoidea aurea (Green and golden bell frog), this protein is Aurein-2.2.